We begin with the raw amino-acid sequence, 487 residues long: Photosystem II CP43 reaction center protein (487 aa).

Residues 1-28 (MKVFVLGWLLKINLMKTLYSQRRFYHVE) constitute a propeptide that is removed on maturation. 5 helical membrane passes run 83–107 (LFEV…PHLA), 148–169 (LIGP…RDKN), 192–214 (KSLF…RFVS), 269–289 (KPFA…LSYS), and 305–326 (WYNN…ASQA). Glu-381 is a [CaMn4O5] cluster binding site. The chain crosses the membrane as a helical span at residues 461–485 (RARAAAAGFEKGINRENEPVLSMRP).

This sequence belongs to the PsbB/PsbC family. PsbC subfamily. In terms of assembly, PSII is composed of 1 copy each of membrane proteins PsbA, PsbB, PsbC, PsbD, PsbE, PsbF, PsbH, PsbI, PsbJ, PsbK, PsbL, PsbM, PsbT, PsbX, PsbY, PsbZ, Psb30/Ycf12, at least 3 peripheral proteins of the oxygen-evolving complex and a large number of cofactors. It forms dimeric complexes. Requires Binds multiple chlorophylls and provides some of the ligands for the Ca-4Mn-5O cluster of the oxygen-evolving complex. It may also provide a ligand for a Cl- that is required for oxygen evolution. PSII binds additional chlorophylls, carotenoids and specific lipids. as cofactor.

The protein localises to the plastid. The protein resides in the chloroplast thylakoid membrane. Functionally, one of the components of the core complex of photosystem II (PSII). It binds chlorophyll and helps catalyze the primary light-induced photochemical processes of PSII. PSII is a light-driven water:plastoquinone oxidoreductase, using light energy to abstract electrons from H(2)O, generating O(2) and a proton gradient subsequently used for ATP formation. In Porphyra purpurea (Red seaweed), this protein is Photosystem II CP43 reaction center protein.